A 126-amino-acid polypeptide reads, in one-letter code: Fluoride-specific ion channel FluC 2 (126 aa).

4 helical membrane passes run 7–27 (MWVG…GLSI), 37–57 (LGTF…SILF), 65–85 (YGDL…TTFS), and 101–121 (AIAA…AAFG). Positions 79 and 82 each coordinate Na(+).

It belongs to the fluoride channel Fluc/FEX (TC 1.A.43) family.

Its subcellular location is the cell inner membrane. It catalyses the reaction fluoride(in) = fluoride(out). With respect to regulation, na(+) is not transported, but it plays an essential structural role and its presence is essential for fluoride channel function. Its function is as follows. Fluoride-specific ion channel. Important for reducing fluoride concentration in the cell, thus reducing its toxicity. This Yersinia pseudotuberculosis serotype I (strain IP32953) protein is Fluoride-specific ion channel FluC 2.